A 294-amino-acid chain; its full sequence is UPF0761 membrane protein YPK_4186 (294 aa).

7 helical membrane-spanning segments follow: residues 44–64 (LLSLVPLITVIFALFAAFPMF), 67–87 (ISIKLKAFIFANFMPATGDII), 108–128 (GLIVTALLLIYSVDSVLNIIW), 136–156 (LVFSFAVYWMVLTLGPILVGA), 185–205 (VFPLLISWVSFWLLYSVVPTV), 212–232 (ALIGALVAALLFELGKKGFAM), and 246–266 (VLAVIPILFLWVYWSWCIVLL).

The protein belongs to the UPF0761 family.

The protein resides in the cell inner membrane. This Yersinia pseudotuberculosis serotype O:3 (strain YPIII) protein is UPF0761 membrane protein YPK_4186.